Reading from the N-terminus, the 367-residue chain is Glutamate 5-kinase (367 aa).

K10 provides a ligand contact to ATP. Positions 50, 137, and 149 each coordinate substrate. Residues 169-170 (TD) and 211-217 (TGGMATK) each bind ATP. One can recognise a PUA domain in the interval 275 to 353 (AGEITVDDGA…QQISEILGYE (79 aa)).

The protein belongs to the glutamate 5-kinase family.

The protein resides in the cytoplasm. The enzyme catalyses L-glutamate + ATP = L-glutamyl 5-phosphate + ADP. It participates in amino-acid biosynthesis; L-proline biosynthesis; L-glutamate 5-semialdehyde from L-glutamate: step 1/2. Catalyzes the transfer of a phosphate group to glutamate to form L-glutamate 5-phosphate. This chain is Glutamate 5-kinase, found in Yersinia enterocolitica serotype O:8 / biotype 1B (strain NCTC 13174 / 8081).